The chain runs to 620 residues: Protein translocase subunit SecD (620 aa).

6 consecutive transmembrane segments (helical) span residues 10 to 30 (YLLILAVLAVGFIYSAPNLYP), 464 to 484 (LWGMLFVSLFIIVIYRFFGVI), 488 to 507 (ALAFNMVMLVALMSILGATL), 511 to 533 (GIAGIVLTMGMAVDANVLIFSRI), 555 to 575 (FTAILDANLTSLLVGGILYAM), and 582 to 602 (GFAVTMSLGIITSMFTAIMVT).

It belongs to the SecD/SecF family. SecD subfamily. As to quaternary structure, forms a complex with SecF. Part of the essential Sec protein translocation apparatus which comprises SecA, SecYEG and auxiliary proteins SecDF-YajC and YidC.

Its subcellular location is the cell inner membrane. Its function is as follows. Part of the Sec protein translocase complex. Interacts with the SecYEG preprotein conducting channel. SecDF uses the proton motive force (PMF) to complete protein translocation after the ATP-dependent function of SecA. The protein is Protein translocase subunit SecD of Pseudomonas aeruginosa (strain ATCC 15692 / DSM 22644 / CIP 104116 / JCM 14847 / LMG 12228 / 1C / PRS 101 / PAO1).